The primary structure comprises 707 residues: Polyribonucleotide nucleotidyltransferase (707 aa).

Aspartate 486 and aspartate 492 together coordinate Mg(2+). The KH domain occupies 553 to 612; sequence PRIHTIKINPEKIKDVIGKGGSVIRALTEETGTTIEIEDDGTVKIAATDGDKAKHAIRRI. An S1 motif domain is found at 622–690; the sequence is GRIYQGKVTR…RQGRVRLSIK (69 aa).

This sequence belongs to the polyribonucleotide nucleotidyltransferase family. In terms of assembly, component of the RNA degradosome, which is a multiprotein complex involved in RNA processing and mRNA degradation. It depends on Mg(2+) as a cofactor.

It is found in the cytoplasm. The enzyme catalyses RNA(n+1) + phosphate = RNA(n) + a ribonucleoside 5'-diphosphate. In terms of biological role, involved in mRNA degradation. Catalyzes the phosphorolysis of single-stranded polyribonucleotides processively in the 3'- to 5'-direction. This Edwardsiella ictaluri (strain 93-146) protein is Polyribonucleotide nucleotidyltransferase.